The following is a 279-amino-acid chain: Very long chain fatty acid elongase 1 (279 aa).

Residue Met1 is modified to N-acetylmethionine. 7 helical membrane passes run 23 to 43, 61 to 81, 110 to 130, 137 to 154, 176 to 196, 203 to 223, and 231 to 251; these read PLMG…YFIL, FMIV…YEFL, VAWL…IFIL, VTFL…SWWW, VVMY…PYLW, AIQL…YFMP, and IIIH…SNFW. The Di-lysine motif motif lies at 275–279; sequence KVKAN.

The protein belongs to the ELO family. ELOVL1 subfamily. As to quaternary structure, interacts with LASS2, TECR and HSD17B12. Interacts with TECR. As to expression, expressed in a broad variety of tissues. Highly expressed in stomach, lung, kidney, skin and intestine. Moderately expressed in white adipose tissue, liver, spleen, brain, brown adipose tissue, heart and muscle. Weakly expressed in testis.

Its subcellular location is the endoplasmic reticulum membrane. It catalyses the reaction a very-long-chain acyl-CoA + malonyl-CoA + H(+) = a very-long-chain 3-oxoacyl-CoA + CO2 + CoA. The catalysed reaction is eicosanoyl-CoA + malonyl-CoA + H(+) = 3-oxodocosanoyl-CoA + CO2 + CoA. It carries out the reaction docosanoyl-CoA + malonyl-CoA + H(+) = 3-oxotetracosanoyl-CoA + CO2 + CoA. The enzyme catalyses tetracosanoyl-CoA + malonyl-CoA + H(+) = 3-oxohexacosanoyl-CoA + CO2 + CoA. It catalyses the reaction (11Z)-eicosenoyl-CoA + malonyl-CoA + H(+) = 3-oxo-(13Z)-docosenoyl-CoA + CO2 + CoA. The catalysed reaction is (13Z)-docosenoyl-CoA + malonyl-CoA + H(+) = 3-oxo-(15Z)-tetracosenoyl-CoA + CO2 + CoA. Its pathway is lipid metabolism; fatty acid biosynthesis. Its function is as follows. Catalyzes the first and rate-limiting reaction of the four reactions that constitute the long-chain fatty acids elongation cycle. This endoplasmic reticulum-bound enzymatic process allows the addition of 2 carbons to the chain of long- and very long-chain fatty acids (VLCFAs) per cycle. Condensing enzyme that exhibits activity toward saturated and monounsaturated acyl-CoA substrates, with the highest activity towards C22:0 acyl-CoA. May participate in the production of both saturated and monounsaturated VLCFAs of different chain lengths that are involved in multiple biological processes as precursors of membrane lipids and lipid mediators. Important for saturated C24:0 and monounsaturated C24:1 sphingolipid synthesis. Indirectly inhibits RPE65 via production of VLCFAs. The chain is Very long chain fatty acid elongase 1 from Mus musculus (Mouse).